A 338-amino-acid chain; its full sequence is Adenylosuccinate synthetase (338 aa).

GTP-binding positions include 12 to 18 (GDEGKGK) and 42 to 44 (GHT). The active-site Proton acceptor is the aspartate 13. Positions 13 and 42 each coordinate Mg(2+). Residues 13-16 (DEGK), 40-43 (NAGH), threonine 127, arginine 141, glutamine 179, threonine 194, and arginine 256 contribute to the IMP site. The active-site Proton donor is the histidine 43. 252–258 (TVTGRRR) is a substrate binding site. Residues arginine 258, 284–286 (CLD), and 324–326 (STG) each bind GTP.

Belongs to the adenylosuccinate synthetase family. Homodimer. Requires Mg(2+) as cofactor.

The protein localises to the cytoplasm. It catalyses the reaction IMP + L-aspartate + GTP = N(6)-(1,2-dicarboxyethyl)-AMP + GDP + phosphate + 2 H(+). It functions in the pathway purine metabolism; AMP biosynthesis via de novo pathway; AMP from IMP: step 1/2. Its function is as follows. Plays an important role in the de novo pathway of purine nucleotide biosynthesis. Catalyzes the first committed step in the biosynthesis of AMP from IMP. In Methanococcus maripaludis (strain DSM 14266 / JCM 13030 / NBRC 101832 / S2 / LL), this protein is Adenylosuccinate synthetase.